A 913-amino-acid polypeptide reads, in one-letter code: ER degradation-enhancing alpha-mannosidase-like protein 3 (913 aa).

The N-terminal stretch at M1–W15 is a signal peptide. N104 carries an N-linked (GlcNAc...) asparagine glycan. The active-site Proton donor is the E132. A glycan (N-linked (GlcNAc...) asparagine) is linked at N181. D279 is a catalytic residue. Residue E373 is the Proton donor of the active site. E391 is a catalytic residue. Ca(2+) is bound at residue T477. An N-linked (GlcNAc...) asparagine glycan is attached at N497. One can recognise a PA domain in the interval L660–I766. The N-linked (GlcNAc...) asparagine glycan is linked to N797. Residues E823–L895 form a disordered region. Low complexity predominate over residues P826–S839. Positions R843–K866 are enriched in basic and acidic residues. The Prevents secretion from ER motif lies at K910 to L913.

Belongs to the glycosyl hydrolase 47 family. Ca(2+) is required as a cofactor.

The protein localises to the endoplasmic reticulum lumen. The enzyme catalyses N(4)-(alpha-D-Man-(1-&gt;2)-alpha-D-Man-(1-&gt;2)-alpha-D-Man-(1-&gt;3)-[alpha-D-Man-(1-&gt;2)-alpha-D-Man-(1-&gt;3)-[alpha-D-Man-(1-&gt;2)-alpha-D-Man-(1-&gt;6)]-alpha-D-Man-(1-&gt;6)]-beta-D-Man-(1-&gt;4)-beta-D-GlcNAc-(1-&gt;4)-beta-D-GlcNAc)-L-asparaginyl-[protein] (N-glucan mannose isomer 9A1,2,3B1,2,3) + 4 H2O = N(4)-(alpha-D-Man-(1-&gt;3)-[alpha-D-Man-(1-&gt;3)-[alpha-D-Man-(1-&gt;6)]-alpha-D-Man-(1-&gt;6)]-beta-D-Man-(1-&gt;4)-beta-D-GlcNAc-(1-&gt;4)-beta-D-GlcNAc)-L-asparaginyl-[protein] (N-glucan mannose isomer 5A1,2) + 4 beta-D-mannose. It carries out the reaction N(4)-(alpha-D-Man-(1-&gt;2)-alpha-D-Man-(1-&gt;2)-alpha-D-Man-(1-&gt;3)-[alpha-D-Man-(1-&gt;3)-[alpha-D-Man-(1-&gt;2)-alpha-D-Man-(1-&gt;6)]-alpha-D-Man-(1-&gt;6)]-beta-D-Man-(1-&gt;4)-beta-D-GlcNAc-(1-&gt;4)-beta-D-GlcNAc)-L-asparaginyl-[protein] (N-glucan mannose isomer 8A1,2,3B1,3) + 3 H2O = N(4)-(alpha-D-Man-(1-&gt;3)-[alpha-D-Man-(1-&gt;3)-[alpha-D-Man-(1-&gt;6)]-alpha-D-Man-(1-&gt;6)]-beta-D-Man-(1-&gt;4)-beta-D-GlcNAc-(1-&gt;4)-beta-D-GlcNAc)-L-asparaginyl-[protein] (N-glucan mannose isomer 5A1,2) + 3 beta-D-mannose. The protein operates within protein modification; protein glycosylation. In terms of biological role, may be involved in endoplasmic reticulum-associated degradation (ERAD). This chain is ER degradation-enhancing alpha-mannosidase-like protein 3 (edem3), found in Xenopus laevis (African clawed frog).